The chain runs to 173 residues: Large ribosomal subunit protein uL10 (173 aa).

This sequence belongs to the universal ribosomal protein uL10 family. As to quaternary structure, part of the ribosomal stalk of the 50S ribosomal subunit. The N-terminus interacts with L11 and the large rRNA to form the base of the stalk. The C-terminus forms an elongated spine to which L12 dimers bind in a sequential fashion forming a multimeric L10(L12)X complex.

Functionally, forms part of the ribosomal stalk, playing a central role in the interaction of the ribosome with GTP-bound translation factors. The protein is Large ribosomal subunit protein uL10 of Desulfatibacillum aliphaticivorans.